Reading from the N-terminus, the 119-residue chain is MESRMEGDVYSGFGERYQMDGKLLQNFQKSFVQVQDILDQNRLLINEINQNHESKQADHLGRNVGLIRELNNNIRTVASLYGDLSHSFARSVDASSEGESTGTLKSDGKANNQKRFRSG.

The tract at residues 91–119 (SVDASSEGESTGTLKSDGKANNQKRFRSG) is disordered. Residues 93 to 111 (DASSEGESTGTLKSDGKAN) show a composition bias toward polar residues.

The protein belongs to the EARLY FLOWERING 4 family. As to quaternary structure, homodimer.

The protein resides in the nucleus. Its function is as follows. Component of the central CCA1/LHY-TOC1 feedback loop in the circadian clock that promotes clock accuracy and is required for sustained rhythms in the absence of daily light/dark cycles. This Arabidopsis thaliana (Mouse-ear cress) protein is Protein ELF4-LIKE 2 (EFL2).